The following is a 165-amino-acid chain: NADH-quinone oxidoreductase subunit I (165 aa).

2 4Fe-4S ferredoxin-type domains span residues His-66–Thr-98 and Ser-109–Gly-138. [4Fe-4S] cluster is bound by residues Cys-78, Cys-81, Cys-84, Cys-88, Cys-118, Cys-121, Cys-124, and Cys-128.

It belongs to the complex I 23 kDa subunit family. In terms of assembly, NDH-1 is composed of 14 different subunits. Subunits NuoA, H, J, K, L, M, N constitute the membrane sector of the complex. It depends on [4Fe-4S] cluster as a cofactor.

Its subcellular location is the cell inner membrane. It catalyses the reaction a quinone + NADH + 5 H(+)(in) = a quinol + NAD(+) + 4 H(+)(out). Functionally, NDH-1 shuttles electrons from NADH, via FMN and iron-sulfur (Fe-S) centers, to quinones in the respiratory chain. The immediate electron acceptor for the enzyme in this species is believed to be ubiquinone. Couples the redox reaction to proton translocation (for every two electrons transferred, four hydrogen ions are translocated across the cytoplasmic membrane), and thus conserves the redox energy in a proton gradient. The protein is NADH-quinone oxidoreductase subunit I of Campylobacter fetus subsp. fetus (strain 82-40).